A 433-amino-acid chain; its full sequence is Nuclear hormone receptor family member nhr-98 (433 aa).

Positions S41–F116 form a DNA-binding region, nuclear receptor. 2 NR C4-type zinc fingers span residues C44–C64 and C80–C104. Residues E177–A433 enclose the NR LBD domain.

The protein belongs to the nuclear hormone receptor family.

It is found in the nucleus. Functionally, orphan nuclear receptor. This chain is Nuclear hormone receptor family member nhr-98 (nhr-98), found in Caenorhabditis elegans.